Reading from the N-terminus, the 275-residue chain is Orotidine 5'-phosphate decarboxylase (275 aa).

Lysine 101 acts as the Proton donor in catalysis.

This sequence belongs to the OMP decarboxylase family. Type 2 subfamily.

It catalyses the reaction orotidine 5'-phosphate + H(+) = UMP + CO2. It participates in pyrimidine metabolism; UMP biosynthesis via de novo pathway; UMP from orotate: step 2/2. This chain is Orotidine 5'-phosphate decarboxylase, found in Leptospira interrogans serogroup Icterohaemorrhagiae serovar Lai (strain 56601).